A 164-amino-acid chain; its full sequence is Interferon gamma (164 aa).

Positions methionine 1–glycine 19 are cleaved as a signal peptide. 2 N-linked (GlcNAc...) asparagine glycosylation sites follow: asparagine 42 and asparagine 61.

It belongs to the type II (or gamma) interferon family. Homodimer.

The protein resides in the secreted. Produced by lymphocytes activated by specific antigens or mitogens. IFN-gamma, in addition to having antiviral activity, has important immunoregulatory functions. It is a potent activator of macrophages, it has antiproliferative effects on transformed cells and it can potentiate the antiviral and antitumor effects of the type I interferons. This chain is Interferon gamma (IFNG), found in Phasianus colchicus colchicus (Black-necked pheasant).